A 449-amino-acid polypeptide reads, in one-letter code: Glutamate--tRNA ligase (449 aa).

The 'HIGH' region signature appears at 10–20 (PSPTGHLHIGN). A 'KMSKS' region motif is present at residues 214–218 (KLSKR). Lys217 contributes to the ATP binding site.

Belongs to the class-I aminoacyl-tRNA synthetase family. Glutamate--tRNA ligase type 1 subfamily. Monomer.

The protein resides in the cytoplasm. The enzyme catalyses tRNA(Glu) + L-glutamate + ATP = L-glutamyl-tRNA(Glu) + AMP + diphosphate. In terms of biological role, catalyzes the attachment of glutamate to tRNA(Glu) in a two-step reaction: glutamate is first activated by ATP to form Glu-AMP and then transferred to the acceptor end of tRNA(Glu). The protein is Glutamate--tRNA ligase of Acholeplasma laidlawii (strain PG-8A).